A 354-amino-acid polypeptide reads, in one-letter code: UDP-glucose 4-epimerase 1 (354 aa).

Residue 8–39 (TILVTGGAGYIGSHTVLQLLQLGFRVVVLDNL) participates in NAD(+) binding. S133 contributes to the substrate binding site. The Proton acceptor role is filled by Y157.

The protein belongs to the NAD(P)-dependent epimerase/dehydratase family. NAD(+) serves as cofactor.

The catalysed reaction is UDP-alpha-D-glucose = UDP-alpha-D-galactose. It functions in the pathway carbohydrate metabolism; galactose metabolism. Its function is as follows. Catalyzes the interconversion between UDP-glucose and UDP-galactose. The sequence is that of UDP-glucose 4-epimerase 1 (UGE-1) from Oryza sativa subsp. japonica (Rice).